We begin with the raw amino-acid sequence, 202 residues long: MNEESASSEYKVITPSGNQCVYTSCYCEENVWKLCEYIKNQRHCPLEEVYAVFISNERKKIPIWKQKSSRGDEPVIWDYHVILLHASKQGPSFIYDLDTILPFPCSLDVYSMEAFQSDKHLKPAYWRKLRVIPGDTYLKEFASDRSHMKDSDGNWRMPPPAYPCLETPESKMNLDDFICMDPRVGYGEVYSLSDFVKHFGVK.

Catalysis depends on residues cysteine 27, histidine 80, and aspartate 96.

This sequence belongs to the NTAQ1 family. In terms of assembly, monomer.

Its subcellular location is the cytoplasm. The protein resides in the cytosol. It localises to the nucleus. The enzyme catalyses N-terminal L-glutaminyl-[protein] + H2O = N-terminal L-glutamyl-[protein] + NH4(+). Its function is as follows. Mediates the side-chain deamidation of N-terminal glutamine residues to glutamate, an important step in N-end rule pathway of protein degradation. Conversion of the resulting N-terminal glutamine to glutamate renders the protein susceptible to arginylation, polyubiquitination and degradation as specified by the N-end rule. Does not act on substrates with internal or C-terminal glutamine and does not act on non-glutamine residues in any position. Does not deaminate acetylated N-terminal glutamine. With the exception of proline, all tested second-position residues on substrate peptides do not greatly influence the activity. In contrast, a proline at position 2, virtually abolishes deamidation of N-terminal glutamine. This chain is Protein N-terminal glutamine amidohydrolase (ntaq1), found in Danio rerio (Zebrafish).